The sequence spans 319 residues: Probable carboxylesterase 5 (319 aa).

Position 1 is an N-acetylmethionine (methionine 1). The Involved in the stabilization of the negatively charged intermediate by the formation of the oxyanion hole signature appears at 79–81 (HGG). Residues serine 163, aspartate 262, and histidine 294 contribute to the active site.

Belongs to the 'GDXG' lipolytic enzyme family. Expressed in roots, leaves, stems, flowers and siliques.

It carries out the reaction a carboxylic ester + H2O = an alcohol + a carboxylate + H(+). Functionally, carboxylesterase acting on esters with varying acyl chain length. This chain is Probable carboxylesterase 5 (CXE5), found in Arabidopsis thaliana (Mouse-ear cress).